A 116-amino-acid chain; its full sequence is HTH-type transcriptional regulator AnsR (116 aa).

One can recognise an HTH cro/C1-type domain in the interval 6–60 (LTELRKKKNWSLQYTADLLGIAKSTYAGYESGYRRPSLEALAMLADLFDTTCDEL). A DNA-binding region (H-T-H motif) is located at residues 17 to 36 (LQYTADLLGIAKSTYAGYES).

Functionally, transcriptional repressor for the ans operon coding for L-asparaginase and L-aspartase. NH4(+) may influence this repression. The chain is HTH-type transcriptional regulator AnsR (ansR) from Bacillus subtilis (strain 168).